The sequence spans 91 residues: Small ribosomal subunit protein uS17 (91 aa).

Belongs to the universal ribosomal protein uS17 family. Part of the 30S ribosomal subunit.

Its function is as follows. One of the primary rRNA binding proteins, it binds specifically to the 5'-end of 16S ribosomal RNA. The sequence is that of Small ribosomal subunit protein uS17 from Saccharopolyspora erythraea (strain ATCC 11635 / DSM 40517 / JCM 4748 / NBRC 13426 / NCIMB 8594 / NRRL 2338).